The primary structure comprises 2162 residues: MEHVIIKQPDTGGDSVRIFVFGDQTSCNLSNLQPLLLKRSNIYLVSFVDQVNCALRHEIARLTTAERRSFPAFSSIQNLVTRGLQKERSVALESTLATIYQLCCFFNYFGDGQKSYPTGPNTHVSGLCIGALSAAAVSSSRSLDELVQAGIEAVLVSLKVGLLVSRTAALFSHQASANSSCSSSASWSYTVPDSQLPLALAEEAIASYTDKTNIPPLSSPYISARGQNSWTVSGPPAVLQGFLRSSQVVEAPRLTPLAVHAPYHAPHIFSVSDVENVIQAVGPVSSLSSKLPFISTSSCGSLSSGTRFQDLLFRAVEGILILPLDLRAAAENMRQVFEAVEDVSRCALIPISTGVCTSLKMSFSPVLADCVSIVDSIMEGTAADGGSKSAPATNPGDSKIAIIGMSGRFPEAADVEAFWAVLYKGLDVHRPVPKDRYDGELYYDPTGKKKNTCKVMHGCWINEPGLFDAKFFNISPKEAEQSDPGQRLALTTAYEALESAGVVAGRTPSTQRDRVGVFYGMTSDDYREVRASVCKPQCKPFPYTKANLTTGGNRAFTPGKINYFFKYCGPSVSVDTACSSSLAAIHLACNSIWRNECDTAVAGGTNVMSNPDSFVGLDRGHFLSRKGNCNNFDDEADGYCRADAVATVVLKRLEDAMADHDPILGVISGAHTNHSAESVSITRPHSGAQEEIFSKLLCESGVHPHQVSYVEMHGTGTQAGDATEMTSVLNCFAPSTGPRRLPHESLHLGSAKANVGHSESASGVTSLIKVLLMMEKNMIPPHCGIKSKINHRFPTDLEQRNVHIAKTATRWGRRREFDNIRRVFVNNFSAAGGNTALLVEDYPPLAAASSQRDSRTAHVVTTSAKCIQSLRGNLEKLKAFVQKTSSSESFMSKLSYTTTARRMHHPFRVAIPAAKPEELLSALDTELRRDSCRCSSESAVAFVFSGQGSQYGAMGKHLLHYTIFRGEIDSYDILAQRHGFPSIMPLVDGSVAIEHLEPLVVQLGTVCVQMALASLWIAFGMQPSYVVGHSLGHFAALKVSGALTASDTIYLVGMRARLLQNKCSIGSHAMLAVRSSAEDVQAYLDADVHDIACINSPQDTVVSGRVDDIDRLSERLLDKGIKATRVNVPFAFHSSQVEPILDELGAIASQVKFHSPCVPIGCPLQGKSLLPGETLTSEASHVKRHCRQTVNFRGILQSAKSDGLVSEKTAWIEIGPHTVCSMLVKANINHDVTAVPSLMRSHDGWQVLASSLATLYSKGLSVAWDEYHHDFECCKEVLRLPAYSWDNKRYWIEYVHDWLLTRGDPPVPAAAPSPAPVSSFSTASVHRIVRESVDRETVALTAECEFTSEQLREVVYGHVVNGNRVCTSSLYADFGVTLGTYILDKYRADLKDHSVDVQEMVVNKPLVHKEGLPMLLRIDVVHDMTASKSATMSIYSINAKGNKTVDHAKSSLCFGESRAWLRSWDSTQYYVERSIEWLKEKADQGLNSRLSSGVIYKLFSSLVEYSSAYKGMKEAIVNTEDFEATALVQFQVDEGNFRCNPMWVDSCGQLAGFLMNGHSKTPLDQVFINHGWQSFRTVRKFCKDKTYRTYVRMRCIEGTTYAGDVYIFDDEGIVGVCGSITFQGVPRRVLDAAMPAPKSPNKTRDHASPNATISRAKPPQGSSPASSAQLAQHSSIEPLKLDAALKSATTAIDPMHAVLRILSEEIGIPLTSLQYDLVFADYGVDSLLSLTISGRLREELDLDIESSVFETCATVGDFAVHLGLDTLASYQSSGESNVSGGVSPRSDSVAAMSSDVTTPPAQSPLGSMSSSPCEDLCAIIAEEIGVSMSVIKSDANLGELGMDSLMSLTVLSRLREELDLDLEGDFFVAHPTYSSFKHVFEQEIEPEIGLGESADLKKYHATSTLLQGSPKSALYTLFLLPDGSGSATSYATISAVGRDICVYGLNCPWLKSAEKLVQFGLKGLASLYVGEIRRRAPHGPYNLGGWSAGGICAYEAAIQFTREGEAVERLILLDSPNPIGLEKLPPRLFDFVNGLGLFGEGKAPDWLLAHFLAFIDALDQWKPVPWDKALDSTTPPPMTYILWAEDGLCKGIDARPEYRDDDPREMRWLLENRTNFGGNSWDILLGEGRLLTERIQDANHFTMLRRGKNAERVAAFIRSAFK.

The tract at residues 19–264 (FVFGDQTSCN…TPLAVHAPYH (246 aa)) is N-terminal acylcarrier protein transacylase domain (SAT). The region spanning 397–841 (DSKIAIIGMS…GGNTALLVED (445 aa)) is the Ketosynthase family 3 (KS3) domain. Catalysis depends on for beta-ketoacyl synthase activity residues cysteine 578, histidine 713, and histidine 757. The tract at residues 941-1245 (AFVFSGQGSQ…PSLMRSHDGW (305 aa)) is malonyl-CoA:ACP transacylase (MAT) domain. Serine 1030 (for acyl/malonyl transferase activity) is an active-site residue. Positions 1322–1636 (TASVHRIVRE…RRVLDAAMPA (315 aa)) are product template (PT) domain. An N-terminal hotdog fold region spans residues 1326–1459 (HRIVRESVDR…SSLCFGESRA (134 aa)). The PKS/mFAS DH domain occupies 1326 to 1631 (HRIVRESVDR…FQGVPRRVLD (306 aa)). Catalysis depends on histidine 1358, which acts as the Proton acceptor; for dehydratase activity. Residues 1486–1631 (LNSRLSSGVI…FQGVPRRVLD (146 aa)) are C-terminal hotdog fold. The Proton donor; for dehydratase activity role is filled by aspartate 1545. The tract at residues 1633 to 1669 (AMPAPKSPNKTRDHASPNATISRAKPPQGSSPASSAQ) is disordered. The span at 1658-1669 (PPQGSSPASSAQ) shows a compositional bias: low complexity. A Carrier 1 domain is found at 1692–1766 (IDPMHAVLRI…DFAVHLGLDT (75 aa)). O-(pantetheine 4'-phosphoryl)serine is present on serine 1726. The segment covering 1772–1783 (SSGESNVSGGVS) has biased composition (low complexity). A disordered region spans residues 1772–1809 (SSGESNVSGGVSPRSDSVAAMSSDVTTPPAQSPLGSMS). The segment covering 1794 to 1809 (SDVTTPPAQSPLGSMS) has biased composition (polar residues). The region spanning 1807 to 1884 (SMSSSPCEDL…SFKHVFEQEI (78 aa)) is the Carrier 2 domain. Serine 1844 carries the O-(pantetheine 4'-phosphoryl)serine modification. The thioesterase (TE) domain stretch occupies residues 1896–2160 (LKKYHATSTL…ERVAAFIRSA (265 aa)). The active-site For thioesterase activity is the serine 1987.

Polyketide synthase; part of the Pks1 gene cluster that mediates the biosynthesis of an anthraquinone derivative pigment that contributes to conidial pigmentation that provides protection from UV radiation, heat and cold stress. The polyketide synthase Pks1 produces 1-acetyl-2,4,6,8-tetrahydroxy-9,10-anthraquinone though condensation of acetyl-CoA with malonyl-CoA. The dehydratase EthD and the laccase Mlac1 further convert the anthraquinone derivative into the final conidial pigment. This Metarhizium album (strain ARSEF 1941) protein is Polyketide synthase 1.